Consider the following 248-residue polypeptide: ATP synthase subunit a, chloroplastic (248 aa).

A run of 5 helical transmembrane segments spans residues 38 to 58 (QVLITSWIVIAVLLGSATLAV), 96 to 116 (VPFIGTMFLFIFVSNWAGALF), 135 to 155 (INTTVALALLTSVAYFYAGFT), 200 to 220 (LVVAVLVSLVPIVVPIPVMFL), and 221 to 241 (GLFTSGIQALIFATLAAAYIG).

It belongs to the ATPase A chain family. As to quaternary structure, F-type ATPases have 2 components, CF(1) - the catalytic core - and CF(0) - the membrane proton channel. CF(1) has five subunits: alpha(3), beta(3), gamma(1), delta(1), epsilon(1). CF(0) has four main subunits: a, b, b' and c.

It localises to the plastid. The protein resides in the chloroplast thylakoid membrane. Its function is as follows. Key component of the proton channel; it plays a direct role in the translocation of protons across the membrane. In Cryptomeria japonica (Japanese cedar), this protein is ATP synthase subunit a, chloroplastic.